The sequence spans 492 residues: RNA-binding protein Nova-2 (492 aa).

Residues 10–26 (KRPLETPPEVVCTKRSN) carry the Bipartite nuclear localization signal motif. One can recognise a KH 1 domain in the interval 32–99 (EYFLKVLIPS…EALNAVHSFI (68 aa)). Lysine 112 is covalently cross-linked (Glycyl lysine isopeptide (Lys-Gly) (interchain with G-Cter in SUMO2)). 2 KH domains span residues 130-196 (AKQA…VSAI) and 406-473 (KELV…QYLI).

In terms of assembly, interacts with PTBP2; the interaction is direct. As to expression, brain. Expression restricted to astrocytes.

It is found in the nucleus. Functions to regulate alternative splicing in neurons by binding pre-mRNA in a sequence-specific manner to activate exon inclusion or exclusion. It binds specifically to the sequences 5'-YCAY-3' and regulates splicing in only a subset of regulated exons. Binding to an exonic 5'-YCAY-3' cluster changes the protein complexes assembled on pre-mRNA, blocking U1 snRNP binding and exon inclusion, whereas binding to an intronic 5'-YCAY-3' cluster enhances spliceosome assembly and exon inclusion. With NOVA1, they perform unique biological functions in different brain areas and cell types. Uniquely regulates alternative splicing events of a series of axon guidance related genes during cortical development, being essential for central nervous system development by regulating neural networks wiring. Regulates differentially alternative splicing on the same transcripts expressed in different neurons. This includes functional differences in transcripts expressed in cortical and cerebellar excitatory versus inhibitory neurons where is required for, respectively, development of laminar structure and motor coordination and synapse formation. Also the regulation the regulation of intron retention can sequester the trans-acting splicing factor PTBP2, acting as a variable cis-acting scaffolding platform for PTBP2 across various natural conditions. This is RNA-binding protein Nova-2 from Homo sapiens (Human).